The chain runs to 154 residues: Transcriptional repressor NrdR (154 aa).

A zinc finger lies at 3 to 34; that stretch reads CPFCGNDETKVLESRQVEEGTAVRRRRECERC. The 91-residue stretch at 49–139 folds into the ATP-cone domain; it reads LIVVKKDGRR…VYREFKDVQR (91 aa).

It belongs to the NrdR family. Zn(2+) serves as cofactor.

Negatively regulates transcription of bacterial ribonucleotide reductase nrd genes and operons by binding to NrdR-boxes. The protein is Transcriptional repressor NrdR of Desulfitobacterium hafniense (strain DSM 10664 / DCB-2).